A 428-amino-acid chain; its full sequence is Probable pectin lyase F (428 aa).

Residues 1 to 20 (MVLLHPLLTAAALLGASARA) form the signal peptide. Cysteines 83 and 107 form a disulfide. Residue arginine 257 is part of the active site. The N-linked (GlcNAc...) asparagine glycan is linked to asparagine 276. Residues cysteine 324 and cysteine 332 are joined by a disulfide bond. The interval 383 to 428 (GSGGSGAASSSVSITPSPTSSAIPSSSATPSSSAYARRHYARHHHY) is disordered. The segment covering 389–417 (AASSSVSITPSPTSSAIPSSSATPSSSAY) has biased composition (low complexity). A compositionally biased stretch (basic residues) spans 418–428 (ARRHYARHHHY).

Belongs to the polysaccharide lyase 1 family.

Its subcellular location is the secreted. The catalysed reaction is Eliminative cleavage of (1-&gt;4)-alpha-D-galacturonan methyl ester to give oligosaccharides with 4-deoxy-6-O-methyl-alpha-D-galact-4-enuronosyl groups at their non-reducing ends.. Its function is as follows. Pectinolytic enzymes consist of four classes of enzymes: pectin lyase, polygalacturonase, pectin methylesterase and rhamnogalacturonase. Among pectinolytic enzymes, pectin lyase is the most important in depolymerization of pectin, since it cleaves internal glycosidic bonds of highly methylated pectins. The chain is Probable pectin lyase F (pelF) from Aspergillus oryzae (strain ATCC 42149 / RIB 40) (Yellow koji mold).